A 720-amino-acid polypeptide reads, in one-letter code: Pro-neuregulin-3, membrane-bound isoform (720 aa).

Residues 1-360 are Extracellular-facing; the sequence is MSEGAAAASP…MESEEVYQRQ (360 aa). 3 disordered regions span residues 28–48, 119–223, and 246–280; these read AAAAAAAGGGPDGGGEGAAEP, SSFP…AMPS, and PFQDAASSSSSSSSSATTTTPETSTSPKFHTTTYS. Gly residues predominate over residues 34-44; that stretch reads AGGGPDGGGEG. Over residues 127-148 the composition is skewed to low complexity; that stretch reads TTTTTTSTTSPATPSAGGAASS. A compositionally biased stretch (polar residues) spans 149–163; sequence RTPNRISTRLTTITR. Low complexity-rich tracts occupy residues 187 to 205 and 250 to 271; these read TAAPATVPSTTAPFFSSST and AASSSSSSSSSATTTTPETSTS. The 44-residue stretch at 286–329 folds into the EGF-like domain; sequence HFKPCRDKDLAYCLNDGECFVIETLTGSHKHCRCKEGYQGVRCD. 3 cysteine pairs are disulfide-bonded: C290–C304, C298–C317, and C319–C328. A helical transmembrane segment spans residues 361-381; it reads VLSISCIIFGIVIVGMFCAAF. Residues 382-720 are Cytoplasmic-facing; the sequence is YFKSKKQAKQ…EIQRDSALTK (339 aa). Positions 451–481 are disordered; sequence PQSFPEVPSPDRGSQSVKHHRSLSSCCSPGQ.

Belongs to the neuregulin family. In terms of assembly, interacts with ERBB4. Proteolytic cleavage close to the plasma membrane on the external face leads to the release of the soluble growth factor form. Post-translationally, extensive glycosylation precedes the proteolytic cleavage. Isoform 3 is glycosylated. Highly expressed in most regions of the brain with the exception of corpus callosum. Expressed at lower level in testis. Not detected in heart, placenta, lung, liver, skeletal muscle, kidney, pancreas, spleen, thymus, prostate, ovary, small intestine, colon and peripheral blood leukocytes.

The protein resides in the cell membrane. It localises to the secreted. Its function is as follows. Direct ligand for the ERBB4 tyrosine kinase receptor. Binding results in ligand-stimulated tyrosine phosphorylation and activation of the receptor. Does not bind to the EGF receptor, ERBB2 or ERBB3 receptors. May be a survival factor for oligodendrocytes. This Homo sapiens (Human) protein is Pro-neuregulin-3, membrane-bound isoform (NRG3).